Reading from the N-terminus, the 382-residue chain is Na(+)/H(+) antiporter NhaA (382 aa).

Transmembrane regions (helical) follow at residues 14 to 34, 49 to 69, 87 to 107, 117 to 137, 146 to 166, 171 to 191, 205 to 225, 252 to 272, 285 to 305, 321 to 341, and 356 to 376; these read AGGI…NSSL, MSVS…LIGL, IFPA…YVAF, GWAI…ALLG, VFLL…IAFF, LSVL…LLNA, FILW…GVVL, VAFA…LEGV, VALG…YLAV, IFAV…ISSL, and LGIL…LSIS.

This sequence belongs to the NhaA Na(+)/H(+) (TC 2.A.33) antiporter family.

Its subcellular location is the cell inner membrane. The catalysed reaction is Na(+)(in) + 2 H(+)(out) = Na(+)(out) + 2 H(+)(in). Functionally, na(+)/H(+) antiporter that extrudes sodium in exchange for external protons. This chain is Na(+)/H(+) antiporter NhaA, found in Aliivibrio fischeri (strain ATCC 700601 / ES114) (Vibrio fischeri).